The following is a 447-amino-acid chain: Probable glycine dehydrogenase (decarboxylating) subunit 1 (447 aa).

This sequence belongs to the GcvP family. N-terminal subunit subfamily. In terms of assembly, the glycine cleavage system is composed of four proteins: P, T, L and H. In this organism, the P 'protein' is a heterodimer of two subunits.

It catalyses the reaction N(6)-[(R)-lipoyl]-L-lysyl-[glycine-cleavage complex H protein] + glycine + H(+) = N(6)-[(R)-S(8)-aminomethyldihydrolipoyl]-L-lysyl-[glycine-cleavage complex H protein] + CO2. Its function is as follows. The glycine cleavage system catalyzes the degradation of glycine. The P protein binds the alpha-amino group of glycine through its pyridoxal phosphate cofactor; CO(2) is released and the remaining methylamine moiety is then transferred to the lipoamide cofactor of the H protein. In Bacillus cereus (strain AH187), this protein is Probable glycine dehydrogenase (decarboxylating) subunit 1.